Reading from the N-terminus, the 175-residue chain is MVKSHYICAGRLVRILRGPRQDRVGVIVDIVDANRVLVENPEDAKMWRHVQNLKNVEPLKYCVSVSRNCSAKALKDALASSKALEKYAKTRTAARVEAKKACAASTDFERYQLRVARRSRAHWARKVFDEKDAKTPVSWHKVALKKMQKKAAKMDSTEGAKRRMQKAIAARKAKK.

The interval 150-175 (KAAKMDSTEGAKRRMQKAIAARKAKK) is disordered. Positions 152-161 (AKMDSTEGAK) are enriched in basic and acidic residues. Over residues 162–175 (RRMQKAIAARKAKK) the composition is skewed to basic residues.

The protein belongs to the eukaryotic ribosomal protein eL14 family.

Its function is as follows. Component of the large ribosomal subunit. The ribosome is a large ribonucleoprotein complex responsible for the synthesis of proteins in the cell. The protein is Large ribosomal subunit protein eL14 (RPL14) of Leishmania donovani.